The sequence spans 171 residues: Shikimate kinase (171 aa).

An ATP-binding site is contributed by 11–16; that stretch reads ATGKTT. T15 contributes to the Mg(2+) binding site. Substrate is bound by residues D33, R57, and G79. R117 provides a ligand contact to ATP. Residue R136 coordinates substrate.

Belongs to the shikimate kinase family. Monomer. Requires Mg(2+) as cofactor.

The protein localises to the cytoplasm. It carries out the reaction shikimate + ATP = 3-phosphoshikimate + ADP + H(+). Its pathway is metabolic intermediate biosynthesis; chorismate biosynthesis; chorismate from D-erythrose 4-phosphate and phosphoenolpyruvate: step 5/7. Its function is as follows. Catalyzes the specific phosphorylation of the 3-hydroxyl group of shikimic acid using ATP as a cosubstrate. The polypeptide is Shikimate kinase (Thermoanaerobacter pseudethanolicus (strain ATCC 33223 / 39E) (Clostridium thermohydrosulfuricum)).